Reading from the N-terminus, the 339-residue chain is Fructose-1,6-bisphosphatase isozyme 2 (339 aa).

The segment at 3-10 (DRSPFETD) is important for interaction with ALDOA. Residues valine 18 and 28 to 32 (TGELT) contribute to the AMP site. 2 residues coordinate Mg(2+): aspartate 69 and glutamate 98. 113-114 (KY) serves as a coordination point for AMP. Residues aspartate 119, leucine 121, and aspartate 122 each contribute to the Mg(2+) site. Residue aspartate 122 participates in substrate binding. Arginine 141 contributes to the AMP binding site. The short motif at 204-208 (KKKGK) is the Nuclear localization signal element. 213 to 216 (NEGY) provides a ligand contact to substrate. Phosphotyrosine is present on residues tyrosine 216 and tyrosine 219. Substrate-binding positions include 245 to 249 (YVGSM), tyrosine 265, and lysine 275. Glutamate 281 provides a ligand contact to Mg(2+).

This sequence belongs to the FBPase class 1 family. As to quaternary structure, homotetramer. Interacts with ALDOA; the interaction blocks inhibition by physiological concentrations of AMP and reduces inhibition by Ca(2+). Interacts with alpha-actinin and F-actin. Mg(2+) serves as cofactor. Expressed in muscle, intestine, brain and placenta and very weakly in liver.

It localises to the cell junction. The protein resides in the cytoplasm. It is found in the nucleus. The protein localises to the myofibril. Its subcellular location is the sarcomere. It localises to the z line. It catalyses the reaction beta-D-fructose 1,6-bisphosphate + H2O = beta-D-fructose 6-phosphate + phosphate. It functions in the pathway carbohydrate biosynthesis; gluconeogenesis. Subject to complex allosteric regulation. The enzyme can assume an active R-state, or an inactive T-state. Intermediate conformations may exist. AMP acts as an allosteric inhibitor. Fructose 2,6-bisphosphate acts as a competitive inhibitor. Strongly inhibited by Ca(2+). Functionally, catalyzes the hydrolysis of fructose 1,6-bisphosphate to fructose 6-phosphate in the presence of divalent cations and probably participates in glycogen synthesis from carbohydrate precursors, such as lactate. In Mus musculus (Mouse), this protein is Fructose-1,6-bisphosphatase isozyme 2 (Fbp2).